Consider the following 66-residue polypeptide: Rho-elapitoxin-Da1b (66 aa).

Intrachain disulfides connect cysteine 3–cysteine 24, cysteine 17–cysteine 42, cysteine 46–cysteine 58, and cysteine 59–cysteine 64.

It belongs to the three-finger toxin family. Short-chain subfamily. Aminergic toxin sub-subfamily. In terms of tissue distribution, expressed by the venom gland.

It is found in the secreted. Non-competitive antagonist of alpha-2 adrenergic receptors (ADRA2) in smooth muscles, and partial antagonist of D3 dopamine receptors (DRD3) (inhibits 25% of methylspiperone binding to this receptor). Also shows a low antagonism on D2 dopamine receptors (DRD2) (short isoform). Shows high affinity to adrenergic receptors (Ki=14 nM (ADRA2A), Ki=73 nM (ADRA2B), and Ki=38 nM (ADRA2C)). Increases heart rate and blood catecholamine concentrations. The sequence is that of Rho-elapitoxin-Da1b from Dendroaspis angusticeps (Eastern green mamba).